Here is a 75-residue protein sequence, read N- to C-terminus: Conotoxin Im23.5 (75 aa).

Residues 1 to 23 (MKFFTCLLLLLVVLTVVFDNVDA) form the signal peptide. Intrachain disulfides connect cysteine 24–cysteine 28, cysteine 37–cysteine 40, and cysteine 41–cysteine 43. Residues 24-50 (CDRSCTGVMGHPSCATCCACFTSAGKR) constitute a propeptide that is removed on maturation.

As to expression, expressed by the venom duct.

It is found in the secreted. Functionally, probable neurotoxin. The sequence is that of Conotoxin Im23.5 from Conus imperialis (Imperial cone).